A 205-amino-acid chain; its full sequence is UPF0548 protein At2g17695 (205 aa).

Belongs to the UPF0548 family.

The sequence is that of UPF0548 protein At2g17695 from Arabidopsis thaliana (Mouse-ear cress).